The primary structure comprises 424 residues: Histidine--tRNA ligase (424 aa).

This sequence belongs to the class-II aminoacyl-tRNA synthetase family. In terms of assembly, homodimer.

It is found in the cytoplasm. The enzyme catalyses tRNA(His) + L-histidine + ATP = L-histidyl-tRNA(His) + AMP + diphosphate + H(+). The polypeptide is Histidine--tRNA ligase (Shewanella frigidimarina (strain NCIMB 400)).